The sequence spans 341 residues: Elongation factor G (341 aa).

It belongs to the GTP-binding elongation factor family. EF-G/EF-2 subfamily.

It localises to the cytoplasm. Functionally, catalyzes the GTP-dependent ribosomal translocation step during translation elongation. During this step, the ribosome changes from the pre-translocational (PRE) to the post-translocational (POST) state as the newly formed A-site-bound peptidyl-tRNA and P-site-bound deacylated tRNA move to the P and E sites, respectively. Catalyzes the coordinated movement of the two tRNA molecules, the mRNA and conformational changes in the ribosome. The sequence is that of Elongation factor G (fus) from Streptomyces ramocissimus.